Reading from the N-terminus, the 351-residue chain is Phospho-N-acetylmuramoyl-pentapeptide-transferase (351 aa).

10 consecutive transmembrane segments (helical) span residues 17-37 (TAYATIFAFLLALIFGPFIIL), 63-83 (IPTMGGILIFFCVLVSLFFWI), 85-105 (LWNVYFLIVLFVMISFACLGF), 135-155 (ISVTMLYYFGGEHISIIYFPF), 158-178 (SLKLDLGVLYIPFGMFILISA), 190-210 (GLAIGLSIVVTGALVIIAYLT), 230-250 (LVIFLGALLGGSFGFLWFNAY), 254-274 (IMMGDTGSLSIGAVLGMTALI), 279-299 (ILFAILAGVFVLETLSVIIQV), and 328-348 (QVVIRFWIIGLIFAIIALSTL).

This sequence belongs to the glycosyltransferase 4 family. MraY subfamily. Mg(2+) is required as a cofactor.

The protein localises to the cell inner membrane. The catalysed reaction is UDP-N-acetyl-alpha-D-muramoyl-L-alanyl-gamma-D-glutamyl-meso-2,6-diaminopimeloyl-D-alanyl-D-alanine + di-trans,octa-cis-undecaprenyl phosphate = di-trans,octa-cis-undecaprenyl diphospho-N-acetyl-alpha-D-muramoyl-L-alanyl-D-glutamyl-meso-2,6-diaminopimeloyl-D-alanyl-D-alanine + UMP. The protein operates within cell wall biogenesis; peptidoglycan biosynthesis. Catalyzes the initial step of the lipid cycle reactions in the biosynthesis of the cell wall peptidoglycan: transfers peptidoglycan precursor phospho-MurNAc-pentapeptide from UDP-MurNAc-pentapeptide onto the lipid carrier undecaprenyl phosphate, yielding undecaprenyl-pyrophosphoryl-MurNAc-pentapeptide, known as lipid I. The chain is Phospho-N-acetylmuramoyl-pentapeptide-transferase from Borrelia hermsii (strain HS1 / DAH).